A 371-amino-acid polypeptide reads, in one-letter code: uncharacterized protein (371 aa).

Solcar repeat units follow at residues 3-98, 131-276, and 284-369; these read DDSL…CKVL, RYWG…FKSF, and KSNF…VRKW. 6 consecutive transmembrane segments (helical) span residues 9 to 29, 73 to 93, 137 to 157, 253 to 273, 290 to 310, and 341 to 362; these read AIAG…LDVV, GVGP…VVYE, IFSA…IWVV, LFPS…YEYF, VLAA…HEVL, and YYSG…TFLS.

Belongs to the mitochondrial carrier (TC 2.A.29) family.

Its subcellular location is the mitochondrion inner membrane. This is an uncharacterized protein from Schizosaccharomyces pombe (strain 972 / ATCC 24843) (Fission yeast).